The sequence spans 2434 residues: Protein Ycf2 (2434 aa).

1693–1700 (GPTETGRS) serves as a coordination point for ATP.

It belongs to the Ycf2 family.

Its subcellular location is the plastid. The protein localises to the chloroplast stroma. Its function is as follows. Probable ATPase of unknown function. Its presence in a non-photosynthetic plant (Epifagus virginiana) and experiments in tobacco indicate that it has an essential function which is probably not related to photosynthesis. The chain is Protein Ycf2 from Cycas taitungensis (Prince sago).